The chain runs to 364 residues: Ribosomal RNA large subunit methyltransferase F (364 aa).

The tract at residues 1 to 30 (MTNKRKSAKPLEPAKRAPKPRTKKSRDLSA) is disordered.

The protein belongs to the methyltransferase superfamily. METTL16/RlmF family.

It localises to the cytoplasm. The catalysed reaction is adenosine(1618) in 23S rRNA + S-adenosyl-L-methionine = N(6)-methyladenosine(1618) in 23S rRNA + S-adenosyl-L-homocysteine + H(+). Its function is as follows. Specifically methylates the adenine in position 1618 of 23S rRNA. The protein is Ribosomal RNA large subunit methyltransferase F of Vibrio vulnificus (strain CMCP6).